The sequence spans 380 residues: Cytochrome b (380 aa).

Helical transmembrane passes span 33 to 53, 77 to 98, 113 to 133, and 178 to 198; these read SGSL…FLAM, WLIR…YLHV, WNIG…GYVL, and FFAF…IHLL. His83 and His97 together coordinate heme b. His182 and His196 together coordinate heme b. His201 lines the a ubiquinone pocket. Transmembrane regions (helical) follow at residues 226–246, 288–308, 320–340, and 347–367; these read YKDL…ALFS, LGGV…PILH, LSQI…WIGG, and FVLI…IALP.

It belongs to the cytochrome b family. In terms of assembly, the cytochrome bc1 complex contains 3 respiratory subunits (MT-CYB, CYC1 and UQCRFS1), 2 core proteins (UQCRC1 and UQCRC2) and probably 6 low-molecular weight proteins. It depends on heme b as a cofactor.

The protein localises to the mitochondrion inner membrane. Component of the ubiquinol-cytochrome c reductase complex (complex III or cytochrome b-c1 complex) that is part of the mitochondrial respiratory chain. The b-c1 complex mediates electron transfer from ubiquinol to cytochrome c. Contributes to the generation of a proton gradient across the mitochondrial membrane that is then used for ATP synthesis. The chain is Cytochrome b (mt-cyb) from Polyodon spathula (North American paddlefish).